The following is a 107-amino-acid chain: Probable 4-amino-4-deoxy-L-arabinose-phosphoundecaprenol flippase subunit ArnE (107 aa).

The region spanning 31-105 (RVWGWLALSL…IIVGIILLGG (75 aa)) is the EamA domain. 3 helical membrane-spanning segments follow: residues 34-54 (GWLALSLVLLGCAMLLWLFVL), 57-77 (VPVSVAYPMLSLNFIFITLAA), and 85-105 (IALRHGVGVLLIIVGIILLGG).

It belongs to the ArnE family. In terms of assembly, heterodimer of ArnE and ArnF.

It localises to the cell inner membrane. The protein operates within bacterial outer membrane biogenesis; lipopolysaccharide biosynthesis. Its function is as follows. Translocates 4-amino-4-deoxy-L-arabinose-phosphoundecaprenol (alpha-L-Ara4N-phosphoundecaprenol) from the cytoplasmic to the periplasmic side of the inner membrane. The sequence is that of Probable 4-amino-4-deoxy-L-arabinose-phosphoundecaprenol flippase subunit ArnE from Enterobacter sp. (strain 638).